Reading from the N-terminus, the 635-residue chain is Chaperone protein HtpG (635 aa).

The tract at residues 1–343 (MTAEATVETR…SNDLSLNVSR (343 aa)) is a; substrate-binding. The interval 344-560 (EILQQDPNID…EHDMGAQMRR (217 aa)) is b. A c region spans residues 561-635 (LLEAAGQAVP…LNKLLLELSN (75 aa)).

The protein belongs to the heat shock protein 90 family. Homodimer.

The protein resides in the cytoplasm. Its function is as follows. Molecular chaperone. Has ATPase activity. In Saccharophagus degradans (strain 2-40 / ATCC 43961 / DSM 17024), this protein is Chaperone protein HtpG.